The following is a 373-amino-acid chain: 3-isopropylmalate dehydrogenase (373 aa).

82-93 lines the NAD(+) pocket; sequence GPKWGTGALRPE. Substrate contacts are provided by R100, R110, R139, and D231. D231, D256, and D260 together coordinate Mg(2+). Residue 295–306 coordinates NAD(+); it reads GSAPDLPANKVN.

The protein belongs to the isocitrate and isopropylmalate dehydrogenases family. In terms of assembly, homodimer. Requires Mg(2+) as cofactor. Mn(2+) is required as a cofactor.

Its subcellular location is the cytoplasm. It catalyses the reaction (2R,3S)-3-isopropylmalate + NAD(+) = 4-methyl-2-oxopentanoate + CO2 + NADH. It functions in the pathway amino-acid biosynthesis; L-leucine biosynthesis; L-leucine from 3-methyl-2-oxobutanoate: step 3/4. Catalyzes the oxidation of 3-carboxy-2-hydroxy-4-methylpentanoate (3-isopropylmalate) to 3-carboxy-4-methyl-2-oxopentanoate. The product decarboxylates to 4-methyl-2 oxopentanoate. This is 3-isopropylmalate dehydrogenase (LEU2) from Candida maltosa (Yeast).